The following is a 493-amino-acid chain: Dipeptidase 3 (493 aa).

Positions 1–35 (MQPAGLEGPRALGLRPLGHRLSLLGVLLLVPSLWV) are cleaved as a signal peptide. Residues 41-60 (TPSPSSAPTTPEASNATTAP) are compositionally biased toward low complexity. Residues 41-74 (TPSPSSAPTTPEASNATTAPGIPNDTATSGVTSD) form a disordered region. 2 disulfides stabilise this stretch: Cys-143–Cys-222 and Cys-294–Cys-326. Asn-331 carries N-linked (GlcNAc...) asparagine glycosylation. Ser-462 carries the GPI-anchor amidated serine lipid modification. A propeptide spans 463 to 493 (KAPPHPLPGLMATLTSLALILWLCCSGHRAV) (removed in mature form).

The protein belongs to the metallo-dependent hydrolases superfamily. Peptidase M19 family. In terms of assembly, homodimer; disulfide-linked. Interacts with TEX101; co-localized on the cell surface of spermatocytes, spermatids, and testicular spermatozoa, co-localized only in cytoplasmic droplets of caput and corpus epididymal sperm. Expressed in testis but not ovary.

It is found in the membrane. Functionally, lacks dipeptidase activity and is unable to hydrolyze cystinyl-bis-glycine. The absence of activity may be due to the inability of serine (instead of aspartate found in DPEP1/2) at position 356 to function as the acid/base catalyst and activate the nucleophilic water/hydroxide. Does not hydrolyze leukotriene D4 (LTD4) into leukotriene E4 (LTE4). Does not hydrolyze the beta-lactam antibiotic imipenem. The chain is Dipeptidase 3 (Dpep3) from Mus musculus (Mouse).